Reading from the N-terminus, the 430-residue chain is RPM1 interacting protein 13 (430 aa).

A disordered region spans residues 1 to 21 (MGSGNHVDIVDVSSGEEDVDT). Positions 231–300 (RHRIRQPIPH…QVSQSSHHSS (70 aa)) are nuclear localization.

Interacts with RPM1 (via its NB-ARC domain). Binds to ARF1 in the nucleus.

It is found in the nucleus. Resistance protein interactor which positively enhances RPM1-mediated resistance to necrotrophic bacterial pathogens Pseudomonas syringae pv. tomato DC3000 harboring type III effector protein AvrRpm1 or AvrB, but prevents the hypersensitive response (HR) controlled by RPM1. Together with ARF1, promotes leaf senescence and cell death, probably by facilitating the translocation of ARF1 into the nucleus, and activates ROS-related enzymes (e.g. POD, CAT and SOD). This chain is RPM1 interacting protein 13, found in Arabidopsis thaliana (Mouse-ear cress).